Reading from the N-terminus, the 273-residue chain is Phosphate import ATP-binding protein PstB 1 (273 aa).

One can recognise an ABC transporter domain in the interval 27 to 268 (ISIEHLSLYY…PLKKQTEDYI (242 aa)). Residue 59 to 66 (GPSGCGKS) coordinates ATP.

The protein belongs to the ABC transporter superfamily. Phosphate importer (TC 3.A.1.7) family. In terms of assembly, the complex is composed of two ATP-binding proteins (PstB), two transmembrane proteins (PstC and PstA) and a solute-binding protein (PstS).

Its subcellular location is the cell inner membrane. The catalysed reaction is phosphate(out) + ATP + H2O = ADP + 2 phosphate(in) + H(+). Its function is as follows. Part of the ABC transporter complex PstSACB involved in phosphate import. Responsible for energy coupling to the transport system. The protein is Phosphate import ATP-binding protein PstB 1 of Vibrio cholerae serotype O1 (strain ATCC 39315 / El Tor Inaba N16961).